The primary structure comprises 735 residues: Diacylglycerol kinase alpha (735 aa).

EF-hand domains are found at residues 110–145 (RPED…MMRV) and 155–190 (ELRP…TVPL). Ca(2+) is bound by residues Asp123, Asp125, Asn127, Glu134, Asp168, Asp170, Ser172, Ser174, and Glu179. Phorbol-ester/DAG-type zinc fingers lie at residues 205–253 (QHMW…ALPC) and 269–319 (SHVW…GHEC). The region spanning 372 to 506 (PNTHPLLVFV…MDRWSVEVIP (135 aa)) is the DAGKc domain. At Lys484 the chain carries N6-acetyllysine.

This sequence belongs to the eukaryotic diacylglycerol kinase family. Monomer. As to expression, expressed in lymphocytes.

Its subcellular location is the cytoplasm. The protein resides in the cytosol. The enzyme catalyses a 1,2-diacyl-sn-glycerol + ATP = a 1,2-diacyl-sn-glycero-3-phosphate + ADP + H(+). It catalyses the reaction a 1-O-alkyl-sn-glycerol + ATP = a 1-O-alkyl-sn-glycero-3-phosphate + ADP + H(+). The catalysed reaction is 1-O-alkyl-2-acyl-sn-glycerol + ATP = 1-O-alkyl-2-acyl-sn-glycero-3-phosphate + ADP + H(+). It carries out the reaction 1,2-dihexadecanoyl-sn-glycerol + ATP = 1,2-dihexadecanoyl-sn-glycero-3-phosphate + ADP + H(+). The enzyme catalyses 1-hexadecanoyl-2-(9Z-octadecenoyl)-sn-glycerol + ATP = 1-hexadecanoyl-2-(9Z-octadecenoyl)-sn-glycero-3-phosphate + ADP + H(+). It catalyses the reaction 2-(9Z-octadecenoyl)-glycerol + ATP = 2-(9Z-octadecenoyl)-sn-glycero-3-phosphate + ADP + H(+). The catalysed reaction is 1,2-di-(9Z-octadecenoyl)-sn-glycerol + ATP = 1,2-di-(9Z-octadecenoyl)-sn-glycero-3-phosphate + ADP + H(+). It carries out the reaction 1-octadecanoyl-2-(5Z,8Z,11Z,14Z-eicosatetraenoyl)-sn-glycerol + ATP = 1-octadecanoyl-2-(5Z,8Z,11Z,14Z-eicosatetraenoyl)-sn-glycero-3-phosphate + ADP + H(+). The enzyme catalyses 1,2-didecanoyl-sn-glycerol + ATP = 1,2-didecanoyl-sn-glycero-3-phosphate + ADP + H(+). It catalyses the reaction 1-O-hexadecyl-2-acetyl-sn-glycerol + ATP = 1-O-hexadecyl-2-acetyl-sn-glycero-3-phosphate + ADP + H(+). The catalysed reaction is 1-O-hexadecyl-2-(5Z,8Z,11Z,14Z-eicosatetraenoyl)-sn-glycerol + ATP = 1-O-hexadecyl-2-(5Z,8Z,11Z,14Z-eicosatetraenoyl)-sn-glycero-3-phosphate + ADP + H(+). It carries out the reaction 1-O-hexadecyl-2-(9Z-octadecenoyl)-sn-glycerol + ATP = 1-O-hexadecyl-2-(9Z-octadecenoyl)-sn-glycero-3-phosphate + ADP + H(+). The enzyme catalyses 1-O-hexadecyl-sn-glycerol + ATP = 1-O-hexadecyl-sn-glycero-3-phosphate + ADP + H(+). It participates in lipid metabolism; glycerolipid metabolism. With respect to regulation, stimulated by calcium and phosphatidylserine. Functionally, diacylglycerol kinase that converts diacylglycerol/DAG into phosphatidic acid/phosphatidate/PA and regulates the respective levels of these two bioactive lipids. Thereby, acts as a central switch between the signaling pathways activated by these second messengers with different cellular targets and opposite effects in numerous biological processes. Also plays an important role in the biosynthesis of complex lipids. Can also phosphorylate 1-alkyl-2-acylglycerol in vitro as efficiently as diacylglycerol provided it contains an arachidonoyl group. Also involved in the production of alkyl-lysophosphatidic acid, another bioactive lipid, through the phosphorylation of 1-alkyl-2-acetyl glycerol. This chain is Diacylglycerol kinase alpha (DGKA), found in Homo sapiens (Human).